Reading from the N-terminus, the 222-residue chain is Phosphoribosylformylglycinamidine synthase subunit PurQ (222 aa).

The Glutamine amidotransferase type-1 domain occupies 3 to 222 (AAVVVFPGSN…RALSGLLTDA (220 aa)). The Nucleophile role is filled by Cys86. Catalysis depends on residues His194 and Glu196.

In terms of assembly, part of the FGAM synthase complex composed of 1 PurL, 1 PurQ and 2 PurS subunits.

The protein localises to the cytoplasm. It carries out the reaction N(2)-formyl-N(1)-(5-phospho-beta-D-ribosyl)glycinamide + L-glutamine + ATP + H2O = 2-formamido-N(1)-(5-O-phospho-beta-D-ribosyl)acetamidine + L-glutamate + ADP + phosphate + H(+). The catalysed reaction is L-glutamine + H2O = L-glutamate + NH4(+). The protein operates within purine metabolism; IMP biosynthesis via de novo pathway; 5-amino-1-(5-phospho-D-ribosyl)imidazole from N(2)-formyl-N(1)-(5-phospho-D-ribosyl)glycinamide: step 1/2. In terms of biological role, part of the phosphoribosylformylglycinamidine synthase complex involved in the purines biosynthetic pathway. Catalyzes the ATP-dependent conversion of formylglycinamide ribonucleotide (FGAR) and glutamine to yield formylglycinamidine ribonucleotide (FGAM) and glutamate. The FGAM synthase complex is composed of three subunits. PurQ produces an ammonia molecule by converting glutamine to glutamate. PurL transfers the ammonia molecule to FGAR to form FGAM in an ATP-dependent manner. PurS interacts with PurQ and PurL and is thought to assist in the transfer of the ammonia molecule from PurQ to PurL. In Ruegeria sp. (strain TM1040) (Silicibacter sp.), this protein is Phosphoribosylformylglycinamidine synthase subunit PurQ.